Reading from the N-terminus, the 238-residue chain is Ribonuclease PH (238 aa).

Residues Arg-86 and Gly-124–Arg-126 each bind phosphate.

The protein belongs to the RNase PH family. In terms of assembly, homohexameric ring arranged as a trimer of dimers.

The catalysed reaction is tRNA(n+1) + phosphate = tRNA(n) + a ribonucleoside 5'-diphosphate. Phosphorolytic 3'-5' exoribonuclease that plays an important role in tRNA 3'-end maturation. Removes nucleotide residues following the 3'-CCA terminus of tRNAs; can also add nucleotides to the ends of RNA molecules by using nucleoside diphosphates as substrates, but this may not be physiologically important. Probably plays a role in initiation of 16S rRNA degradation (leading to ribosome degradation) during starvation. This is Ribonuclease PH from Chelativorans sp. (strain BNC1).